Reading from the N-terminus, the 351-residue chain is Phosphoribosylformylglycinamidine cyclo-ligase (351 aa).

This sequence belongs to the AIR synthase family.

It localises to the cytoplasm. The catalysed reaction is 2-formamido-N(1)-(5-O-phospho-beta-D-ribosyl)acetamidine + ATP = 5-amino-1-(5-phospho-beta-D-ribosyl)imidazole + ADP + phosphate + H(+). It participates in purine metabolism; IMP biosynthesis via de novo pathway; 5-amino-1-(5-phospho-D-ribosyl)imidazole from N(2)-formyl-N(1)-(5-phospho-D-ribosyl)glycinamide: step 2/2. In Burkholderia mallei (strain NCTC 10247), this protein is Phosphoribosylformylglycinamidine cyclo-ligase.